The sequence spans 341 residues: Transmembrane protein 120A-A (341 aa).

The Cytoplasmic segment spans residues Met1–Glu131. A CoA-binding site is contributed by Lys129. The chain crosses the membrane as a helical span at residues Tyr132–Arg151. At Phe152–Arg157 the chain is on the extracellular side. The chain crosses the membrane as a helical span at residues Val158 to Ile176. The Cytoplasmic segment spans residues Arg177 to Lys189. Residues Ser186 and Lys187 each contribute to the CoA site. The chain crosses the membrane as a helical span at residues Gly190–Thr208. The Extracellular portion of the chain corresponds to Trp209 to Met217. A helical transmembrane segment spans residues Phe218–Tyr239. CoA contacts are provided by Gln236, Tyr239, Gln240, and His282. Over Gln240–Arg269 the chain is Cytoplasmic. A helical membrane pass occupies residues Gly270–Phe293. Over Gln294–Glu303 the chain is Extracellular. A helical membrane pass occupies residues Trp304–Tyr329. The Cytoplasmic segment spans residues His330–Leu341. Residue Lys331 participates in CoA binding.

It belongs to the TMEM120 family. In terms of assembly, homodimer.

It localises to the cell membrane. Its subcellular location is the nucleus inner membrane. The protein resides in the endoplasmic reticulum. Functionally, multifunctional protein involved in mechanosensation, and plays an essential role in lipid metabolism. May function as a potential ion channel involved in sensing mechanical stimuli. TMEM120A is structurally similar to a lipid-modifying enzyme, ELOVL7, and contains a bound coenzyme A molecule, which suggests it might function as an enzyme in lipid metabolism. In Danio rerio (Zebrafish), this protein is Transmembrane protein 120A-A (tmem120aa).